The following is a 388-amino-acid chain: Succinate--CoA ligase [ADP-forming] subunit beta (388 aa).

The 236-residue stretch at 9-244 folds into the ATP-grasp domain; sequence KEIFARYGLP…PTQESELEVK (236 aa). Residues Lys46, 53–55, Glu99, Thr102, and Glu107 contribute to the ATP site; that span reads GRG. Mg(2+) contacts are provided by Asn199 and Asp213. Residues Asn264 and 321–323 each bind substrate; that span reads GIL.

It belongs to the succinate/malate CoA ligase beta subunit family. Heterotetramer of two alpha and two beta subunits. It depends on Mg(2+) as a cofactor.

The catalysed reaction is succinate + ATP + CoA = succinyl-CoA + ADP + phosphate. It carries out the reaction GTP + succinate + CoA = succinyl-CoA + GDP + phosphate. Its pathway is carbohydrate metabolism; tricarboxylic acid cycle; succinate from succinyl-CoA (ligase route): step 1/1. Its function is as follows. Succinyl-CoA synthetase functions in the citric acid cycle (TCA), coupling the hydrolysis of succinyl-CoA to the synthesis of either ATP or GTP and thus represents the only step of substrate-level phosphorylation in the TCA. The beta subunit provides nucleotide specificity of the enzyme and binds the substrate succinate, while the binding sites for coenzyme A and phosphate are found in the alpha subunit. This is Succinate--CoA ligase [ADP-forming] subunit beta from Persephonella marina (strain DSM 14350 / EX-H1).